The primary structure comprises 689 residues: Glycine--tRNA ligase beta subunit (689 aa).

This sequence belongs to the class-II aminoacyl-tRNA synthetase family. In terms of assembly, tetramer of two alpha and two beta subunits.

It is found in the cytoplasm. The enzyme catalyses tRNA(Gly) + glycine + ATP = glycyl-tRNA(Gly) + AMP + diphosphate. This Coxiella burnetii (strain RSA 493 / Nine Mile phase I) protein is Glycine--tRNA ligase beta subunit (glyS).